The chain runs to 361 residues: Chorismate synthase (361 aa).

Residues R48 and R54 each contribute to the NADP(+) site. FMN contacts are provided by residues R125–S127, N238–A239, G278, K293–S297, and R319.

The protein belongs to the chorismate synthase family. In terms of assembly, homotetramer. FMNH2 serves as cofactor.

The catalysed reaction is 5-O-(1-carboxyvinyl)-3-phosphoshikimate = chorismate + phosphate. The protein operates within metabolic intermediate biosynthesis; chorismate biosynthesis; chorismate from D-erythrose 4-phosphate and phosphoenolpyruvate: step 7/7. Catalyzes the anti-1,4-elimination of the C-3 phosphate and the C-6 proR hydrogen from 5-enolpyruvylshikimate-3-phosphate (EPSP) to yield chorismate, which is the branch point compound that serves as the starting substrate for the three terminal pathways of aromatic amino acid biosynthesis. This reaction introduces a second double bond into the aromatic ring system. The chain is Chorismate synthase from Escherichia coli (strain SE11).